A 159-amino-acid polypeptide reads, in one-letter code: Protein-export protein SecB (159 aa).

This sequence belongs to the SecB family. In terms of assembly, homotetramer, a dimer of dimers. One homotetramer interacts with 1 SecA dimer.

The protein localises to the cytoplasm. Functionally, one of the proteins required for the normal export of preproteins out of the cell cytoplasm. It is a molecular chaperone that binds to a subset of precursor proteins, maintaining them in a translocation-competent state. It also specifically binds to its receptor SecA. This is Protein-export protein SecB from Pseudomonas fluorescens (strain ATCC BAA-477 / NRRL B-23932 / Pf-5).